A 146-amino-acid polypeptide reads, in one-letter code: Large ribosomal subunit protein uL15 (146 aa).

Residues 1–13 (MKLHELKPAEGSR) are compositionally biased toward basic and acidic residues. Positions 1–65 (MKLHELKPAE…PLYRRLPKRG (65 aa)) are disordered. Gly residues-rich tracts occupy residues 21–31 (RGIGSGNGKTA) and 42–52 (SGGGVRPGFEG).

The protein belongs to the universal ribosomal protein uL15 family. As to quaternary structure, part of the 50S ribosomal subunit.

Functionally, binds to the 23S rRNA. In Halalkalibacterium halodurans (strain ATCC BAA-125 / DSM 18197 / FERM 7344 / JCM 9153 / C-125) (Bacillus halodurans), this protein is Large ribosomal subunit protein uL15.